A 532-amino-acid polypeptide reads, in one-letter code: MRIGGIASGIDTESMIKQLMQVERIPLNKFTQRKITLEWQRDAYREVNLLLKKLDDAAANIRLRSSLNTKEASTTSKAFTAQPNAQVRNGSYQLKVNQIATQSRNISSEAISNGSTKISTTRALNEQNVYADGLNIEDYHGQTFTITTYNSSGAAVEKSFTIDTSKSLDSLFKDINSAGLGVRMSYNSTYDKVIIERTETGAFNAADGSNDYQIVFGGDTGFLNDVLKLNQANEVSGTNAEVEFIDPIMSSEPIVVSDSRTNRVTVGGITFSLTGTTEGFETLNVSSNTDAAFEKVMEFVDTYNATITELRSLLSEPRYRDYPPLTEEQRRELSEREAELWDEKAKSGLLRNDSMLNSLLAQMRADLYAPVQTNGQFSSITQIGITTSSDYRLGGFLEVDEDKLRAALEADPDSVHQLLNGTANSSLTSIPVKDRTSQQRSEIYSQTGLVGRIRSSLSSTMNDIVARAGNERRTEQQFTIGRQILDVDKRIDHFQQRLIQIENRYWAQFSRMEQMMNQANAQYASLQQFFVT.

A coiled-coil region spans residues 507 to 528 (AQFSRMEQMMNQANAQYASLQQ).

This sequence belongs to the FliD family. Homopentamer.

It localises to the secreted. The protein resides in the bacterial flagellum. Its function is as follows. Required for the morphogenesis and for the elongation of the flagellar filament by facilitating polymerization of the flagellin monomers at the tip of growing filament. Forms a capping structure, which prevents flagellin subunits (transported through the central channel of the flagellum) from leaking out without polymerization at the distal end. In Halalkalibacterium halodurans (strain ATCC BAA-125 / DSM 18197 / FERM 7344 / JCM 9153 / C-125) (Bacillus halodurans), this protein is Flagellar hook-associated protein 2 (fliD).